The chain runs to 126 residues: Large ribosomal subunit protein bL12 (126 aa).

This sequence belongs to the bacterial ribosomal protein bL12 family. Homodimer. Part of the ribosomal stalk of the 50S ribosomal subunit. Forms a multimeric L10(L12)X complex, where L10 forms an elongated spine to which 2 to 4 L12 dimers bind in a sequential fashion. Binds GTP-bound translation factors.

Forms part of the ribosomal stalk which helps the ribosome interact with GTP-bound translation factors. Is thus essential for accurate translation. This is Large ribosomal subunit protein bL12 from Rhizobium meliloti (strain 1021) (Ensifer meliloti).